A 554-amino-acid polypeptide reads, in one-letter code: Gamma-aminobutyric acid receptor subunit alpha-4 (554 aa).

The first 35 residues, 1–35, serve as a signal peptide directing secretion; that stretch reads MVSAKKVPAIALSAGVSFALLRFLCLAVCLNESPG. Topologically, residues 36 to 259 are extracellular; that stretch reads QNQKEEKLCT…FHLRRKMGYF (224 aa). N47 is a glycosylation site (N-linked (GlcNAc...) asparagine). R100 provides a ligand contact to 4-aminobutanoate. N-linked (GlcNAc...) asparagine glycosylation is found at N144 and N157. T163 lines the 4-aminobutanoate pocket. C172 and C186 form a disulfide bridge. Residues 260–280 traverse the membrane as a helical segment; that stretch reads MIQTYIPCIMTVILSQVSFWI. Residues 281–284 lie on the Cytoplasmic side of the membrane; sequence NKES. A helical membrane pass occupies residues 285 to 305; the sequence is VPARTVFGITTVLTMTTLSIS. Over 306–318 the chain is Extracellular; it reads ARHSLPKVSYATA. A helical transmembrane segment spans residues 319–341; that stretch reads MDWFIAVCFAFVFSALIEFAAVN. The Cytoplasmic segment spans residues 342 to 517; the sequence is YFTNIQMEKA…PPPSGSGTSK (176 aa). Disordered stretches follow at residues 350–381, 397–435, 452–471, and 495–515; these read KAKRKTSKPPQEVPAAPVQREKHPEAPLQNTN, ESDVGNRTEVGNHSSKSSTVVQESSKGTPRSYLASSPNP, PSASPTSIRTGYMPRKASVG, and ATGKLSATPPPSAPPPSGSGT. Low complexity predominate over residues 410–422; it reads SSKSSTVVQESSK. Pro residues predominate over residues 502–511; the sequence is TPPPSAPPPS. Residues 518–540 form a helical membrane-spanning segment; the sequence is IDKYARILFPVTFGAFNMVYWVV. Residues 541 to 554 lie on the Extracellular side of the membrane; it reads YLSKDTMEKSESLM.

It belongs to the ligand-gated ion channel (TC 1.A.9) family. Gamma-aminobutyric acid receptor (TC 1.A.9.5) subfamily. GABRA4 sub-subfamily. As to quaternary structure, heteropentamer, formed by a combination of alpha (GABRA1-6), beta (GABRB1-3), gamma (GABRG1-3), delta (GABRD), epsilon (GABRE), rho (GABRR1-3), pi (GABRP) and theta (GABRQ) chains, each subunit exhibiting distinct physiological and pharmacological properties. Expressed in the brain.

It localises to the cell membrane. Its subcellular location is the postsynaptic cell membrane. It carries out the reaction chloride(in) = chloride(out). Potentiated by histamine. Alpha subunit of the heteropentameric ligand-gated chloride channel gated by gamma-aminobutyric acid (GABA), a major inhibitory neurotransmitter in the brain. GABA-gated chloride channels, also named GABA(A) receptors (GABAAR), consist of five subunits arranged around a central pore and contain GABA active binding site(s) located at the alpha and beta subunit interface(s). When activated by GABA, GABAARs selectively allow the flow of chloride anions across the cell membrane down their electrochemical gradient. GABAARs containing alpha-4 are predominantly extrasynaptic, contributing to tonic inhibition in dentate granule cells and thalamic relay neurons. Extrasynaptic alpha-4-containing GABAARs control levels of excitability and network activity. GABAAR containing alpha-4-beta-3-delta subunits can simultaneously bind GABA and histamine where histamine binds at the interface of two neighboring beta subunits, which may be involved in the regulation of sleep and wakefulness. This Homo sapiens (Human) protein is Gamma-aminobutyric acid receptor subunit alpha-4.